The primary structure comprises 195 residues: Cytochrome b-245 light chain (195 aa).

The Cytoplasmic portion of the chain corresponds to 2-7 (GQIEWA). The chain crosses the membrane as a helical span at residues 8–30 (MWANEQALASGLILITGGIVATA). At 31–35 (GRFTQ) the chain is on the extracellular side. The chain crosses the membrane as a helical span at residues 36–53 (WYFGAYSIVAGVFVCLLE). The Cytoplasmic segment spans residues 54-69 (YPRGKRKKGSTMERWG). Residues 70–80 (QKYMTAVVKLF) lie within the membrane without spanning it. At 81–86 (GPFTRN) the chain is on the cytoplasmic side. Residues 87–104 (YYVRAVLHLLLSVPAGFL) form a helical membrane-spanning segment. Residue Leu-105 is a topological domain, extracellular. Residues 106 to 126 (ATILGTACLAIASGIYLLAAV) form a helical membrane-spanning segment. The Cytoplasmic segment spans residues 127-195 (RGEQWTPIEP…NPIPVTDEVV (69 aa)). Residues 134 to 195 (IEPKPRERPQ…NPIPVTDEVV (62 aa)) form a disordered region. Residue Thr-147 is modified to Phosphothreonine. A Glycyl lysine isopeptide (Lys-Gly) (interchain with G-Cter in ubiquitin) cross-link involves residue Lys-149. The residue at position 168 (Ser-168) is a Phosphoserine.

It belongs to the p22phox family. In terms of assembly, component of the phagocyte NADPH oxidase core complex/cytochrome b558 complex, composed of CYBB (heavy chain (beta)) and CYBA (light chain (alpha)). Component of the phagocyte NADPH oxidase complex composed of an obligatory core heterodimer formed by the membrane proteins CYBA and CYBB and the cytosolic regulatory subunits NCF1/p47-phox, NCF2/p67-phox, NCF4/p40-phox and the small GTPase RAC1 or RAC2. Interacts with NCF1 (via SH3 domain). Interacts with SH3PXD2A. Interacts with DUOX1, DUOX2 and TPO. Interacts with NOX4; this interaction mediates superoxide generation. Interacts with calprotectin (S100A8/9). Interacts with GBP7. Interacts with NOXO1. Forms a heterodimer with NOX3 and is essential for activity and cell membrane localization of NOX3. Interacts with NOX1. Post-translationally, phosphorylation at Thr-147 enhances NADPH oxidase activity by promoting NCF1/p47-phox binding. In terms of processing, ubiquitinated at Lys-149 likely by RNF145.

Its subcellular location is the cell membrane. Subunit of NADPH oxidase complexes that is required for the NADPH oxidase activity that generates, in various cell types, superoxide from molecular oxygen utilizing NADPH as an electron donor. Subunit of the phagocyte NADPH oxidase complex that mediates the transfer of electrons from cytosolic NADPH to O2 to produce the superoxide anion (O2(-)). In the activated complex, electrons are first transferred from NADPH to flavin adenine dinucleotide (FAD) and subsequently transferred via two heme molecules to molecular oxygen, producing superoxide through an outer-sphere reaction. Activation of the NADPH oxidase complex is initiated by the assembly of cytosolic subunits of the NADPH oxidase complex with the core NADPH oxidase complex to form a complex at the plasma membrane or phagosomal membrane. This activation process is initiated by phosphorylation dependent binding of the cytosolic NCF1/p47-phox subunit to the C-terminus of CYBA/p22-phox. Aassociates with NOX3 to form a functional NADPH oxidase constitutively generating superoxide. The sequence is that of Cytochrome b-245 light chain from Homo sapiens (Human).